The sequence spans 918 residues: Glutamate receptor ionotropic, kainate 1 (918 aa).

The first 30 residues, 1–30 (MELGTLLAQPGLWTRDTSWALLYFLCYILP), serve as a signal peptide directing secretion. Topologically, residues 31–576 (QTAPQVLRIG…VFSFLNPLSP (546 aa)) are extracellular. N-linked (GlcNAc...) asparagine glycans are attached at residues asparagine 68, asparagine 74, asparagine 276, asparagine 379, asparagine 428, asparagine 439, and asparagine 446. L-glutamate is bound by residues proline 531, threonine 533, and arginine 538. N-linked (GlcNAc...) asparagine glycosylation is present at asparagine 561. A helical membrane pass occupies residues 577 to 597 (DIWMYVLLACLGVSCVLFVIA). The Cytoplasmic portion of the chain corresponds to 598-653 (RFTPYEWYNPHPCNPDSDVVENNFTLLNSFWFGVGALMQQGSELMPKALSTRIVGG). The helical transmembrane segment at 654–674 (IWWFFTLIIISSYTANLAAFL) threads the bilayer. At 675 to 834 (TVERMESPID…KEASALGVEN (160 aa)) the chain is on the extracellular side. Positions 704 and 705 each coordinate L-glutamate. Serine 725 carries the phosphoserine; by PKC modification. Glutamate 753 contributes to the L-glutamate binding site. A Phosphothreonine; by PKC modification is found at threonine 761. A disulfide bridge connects residues cysteine 765 and cysteine 819. A glycan (N-linked (GlcNAc...) asparagine) is linked at asparagine 766. Residues 835-855 (IGGIFIVLAAGLVLSVFVAIG) traverse the membrane as a helical segment. The Cytoplasmic segment spans residues 856 to 918 (EFIYKSRKNN…IRKQSSVHTV (63 aa)).

It belongs to the glutamate-gated ion channel (TC 1.A.10.1) family. GRIK1 subfamily. In terms of assembly, homotetramer or heterotetramer of pore-forming glutamate receptor subunits. Tetramers may be formed by the dimerization of dimers. Can form functional heteromeric receptors with GRIK4 and GRIK5. Interacts with KLHL17.

It localises to the cell membrane. The protein resides in the postsynaptic cell membrane. It carries out the reaction Ca(2+)(in) = Ca(2+)(out). Functionally, ionotropic glutamate receptor that functions as a cation-permeable ligand-gated ion channel, gated by L-glutamate and the glutamatergic agonist kainic acid. L-glutamate acts as an excitatory neurotransmitter at many synapses in the central nervous system. Binding of the excitatory neurotransmitter L-glutamate induces a conformation change, leading to the opening of the cation channel, and thereby converts the chemical signal to an electrical impulse. The receptor then desensitizes rapidly and enters a transient inactive state, characterized by the presence of bound agonist. The protein is Glutamate receptor ionotropic, kainate 1 (GRIK1) of Macaca fascicularis (Crab-eating macaque).